Reading from the N-terminus, the 139-residue chain is Transcription antitermination protein NusB (139 aa).

It belongs to the NusB family.

Its function is as follows. Involved in transcription antitermination. Required for transcription of ribosomal RNA (rRNA) genes. Binds specifically to the boxA antiterminator sequence of the ribosomal RNA (rrn) operons. This Escherichia fergusonii (strain ATCC 35469 / DSM 13698 / CCUG 18766 / IAM 14443 / JCM 21226 / LMG 7866 / NBRC 102419 / NCTC 12128 / CDC 0568-73) protein is Transcription antitermination protein NusB.